An 84-amino-acid chain; its full sequence is Acetylcholine receptor subunit alpha (84 aa).

2 cysteine pairs are disulfide-bonded: cysteine 7–cysteine 21 and cysteine 71–cysteine 72. Asparagine 20 is a glycosylation site (N-linked (GlcNAc...) asparagine).

Belongs to the ligand-gated ion channel (TC 1.A.9) family. Acetylcholine receptor (TC 1.A.9.1) subfamily. Alpha-1/CHRNA1 sub-subfamily. As to quaternary structure, one of the alpha chains that assemble within the acetylcholine receptor, a pentamer of two alpha chains, a beta, a delta, and a gamma (in immature muscle) or epsilon (in mature muscle) chains. The muscle heteropentamer composed of alpha-1, beta-1, delta, epsilon subunits interacts with the alpha-conotoxin ImII.

It localises to the postsynaptic cell membrane. The protein resides in the cell membrane. The catalysed reaction is K(+)(in) = K(+)(out). It catalyses the reaction Na(+)(in) = Na(+)(out). In terms of biological role, upon acetylcholine binding, the AChR responds by an extensive change in conformation that affects all subunits and leads to opening of an ion-conducting channel across the plasma membrane. The protein is Acetylcholine receptor subunit alpha (CHRNA1) of Felis catus (Cat).